Consider the following 204-residue polypeptide: Histidine biosynthesis bifunctional protein HisIE (204 aa).

The tract at residues M1–F114 is phosphoribosyl-AMP cyclohydrolase. The segment at L115–K204 is phosphoribosyl-ATP pyrophosphohydrolase.

The protein in the N-terminal section; belongs to the PRA-CH family. This sequence in the C-terminal section; belongs to the PRA-PH family.

The protein resides in the cytoplasm. It carries out the reaction 1-(5-phospho-beta-D-ribosyl)-ATP + H2O = 1-(5-phospho-beta-D-ribosyl)-5'-AMP + diphosphate + H(+). The catalysed reaction is 1-(5-phospho-beta-D-ribosyl)-5'-AMP + H2O = 1-(5-phospho-beta-D-ribosyl)-5-[(5-phospho-beta-D-ribosylamino)methylideneamino]imidazole-4-carboxamide. The protein operates within amino-acid biosynthesis; L-histidine biosynthesis; L-histidine from 5-phospho-alpha-D-ribose 1-diphosphate: step 2/9. It participates in amino-acid biosynthesis; L-histidine biosynthesis; L-histidine from 5-phospho-alpha-D-ribose 1-diphosphate: step 3/9. This is Histidine biosynthesis bifunctional protein HisIE (hisI) from Yersinia pestis.